Here is a 518-residue protein sequence, read N- to C-terminus: Ribonuclease Y (518 aa).

The chain crosses the membrane as a helical span at residues 2–22 (VLNILLAIVGLIVGLGLGFVI). A disordered region spans residues 91–119 (QREQTLDRKDDSLEKREGSLEEKEEKLGA). One can recognise a KH domain in the interval 208–268 (TVSVVTLPND…IRREIARMTL (61 aa)). The HD domain occupies 334–427 (VLNHSIEVAK…VAAADALSAA (94 aa)).

The protein belongs to the RNase Y family.

It localises to the cell membrane. Endoribonuclease that initiates mRNA decay. This is Ribonuclease Y from Enterococcus faecalis (strain ATCC 700802 / V583).